A 1111-amino-acid chain; its full sequence is Serine/threonine-protein kinase Nek10 (1111 aa).

Basic and acidic residues predominate over residues 1–16; that stretch reads MPDQDTKAKSTEKTAD. Disordered stretches follow at residues 1 to 24 and 47 to 72; these read MPDQ…TTTR and AINF…HRAR. A compositionally biased stretch (polar residues) spans 47-63; it reads AINFDSAQNNMTKSEPT. The stretch at 481 to 514 forms a coiled coil; it reads YKDLVSQLNLLLEDELKQIAENIESINQKKAPLK. In terms of domain architecture, Protein kinase spans 519 to 791; the sequence is YAVLDHLGSG…MISDVMMKYL (273 aa). Residues 525 to 533 and lysine 548 each bind ATP; that span reads LGSGAFGCV. The active-site Proton acceptor is the aspartate 655.

This sequence belongs to the protein kinase superfamily. NEK Ser/Thr protein kinase family. NIMA subfamily. Interacts with RAF1 and MAP2K1; the interaction is direct with RAF1 and required for ERK1/2-signaling pathway activation in response to UV irradiation. The cofactor is Mg(2+). Expressed in the mammary gland, lung, spleen, and kidney.

The enzyme catalyses L-seryl-[protein] + ATP = O-phospho-L-seryl-[protein] + ADP + H(+). The catalysed reaction is L-threonyl-[protein] + ATP = O-phospho-L-threonyl-[protein] + ADP + H(+). Plays a role in the cellular response to UV irradiation. Mediates G2/M cell cycle arrest, MEK autoactivation and ERK1/2-signaling pathway activation in response to UV irradiation. In ciliated cells, it is involved in the regulation of mucociliary transport. The chain is Serine/threonine-protein kinase Nek10 from Mus musculus (Mouse).